Consider the following 187-residue polypeptide: 1,6-anhydro-N-acetylmuramyl-L-alanine amidase AmpD (187 aa).

One can recognise an N-acetylmuramoyl-L-alanine amidase domain in the interval 29–167; it reads TLLVVHNISL…APERKTDPGP (139 aa). His34 provides a ligand contact to Zn(2+). The active-site Proton acceptor is Glu116. His154 and Asp164 together coordinate Zn(2+).

Belongs to the N-acetylmuramoyl-L-alanine amidase 2 family. Zn(2+) serves as cofactor.

The protein resides in the cytoplasm. It carries out the reaction Hydrolyzes the link between N-acetylmuramoyl residues and L-amino acid residues in certain cell-wall glycopeptides.. Functionally, involved in cell wall peptidoglycan recycling. Specifically cleaves the amide bond between the lactyl group of N-acetylmuramic acid and the alpha-amino group of the L-alanine in degradation products containing an anhydro N-acetylmuramyl moiety. The polypeptide is 1,6-anhydro-N-acetylmuramyl-L-alanine amidase AmpD (Enterobacter cloacae).